The chain runs to 336 residues: Fructose-1,6-bisphosphatase class 1 (336 aa).

Mg(2+) is bound by residues Glu92, Asp115, Leu117, and Asp118. Substrate is bound by residues 118 to 121, Asn211, Tyr244, 262 to 264, and Lys274; these read DGSS and YLY. A Mg(2+)-binding site is contributed by Glu280.

The protein belongs to the FBPase class 1 family. As to quaternary structure, homotetramer. Mg(2+) serves as cofactor.

It localises to the cytoplasm. The enzyme catalyses beta-D-fructose 1,6-bisphosphate + H2O = beta-D-fructose 6-phosphate + phosphate. The protein operates within carbohydrate biosynthesis; gluconeogenesis. In Aliivibrio salmonicida (strain LFI1238) (Vibrio salmonicida (strain LFI1238)), this protein is Fructose-1,6-bisphosphatase class 1.